A 113-amino-acid chain; its full sequence is Protein NATD1 (113 aa).

One can recognise an N-acetyltransferase domain in the interval 22-112 (EHDRRRRQFT…PLPQYLERLQ (91 aa)).

It belongs to the NATD1 family.

This Homo sapiens (Human) protein is Protein NATD1 (NATD1).